Here is a 1405-residue protein sequence, read N- to C-terminus: DNA-directed RNA polymerase subunit beta' (1405 aa).

Zn(2+) contacts are provided by Cys71, Cys73, Cys86, and Cys89. The Mg(2+) site is built by Asp462, Asp464, and Asp466. 4 residues coordinate Zn(2+): Cys820, Cys893, Cys900, and Cys903.

The protein belongs to the RNA polymerase beta' chain family. The RNAP catalytic core consists of 2 alpha, 1 beta, 1 beta' and 1 omega subunit. When a sigma factor is associated with the core the holoenzyme is formed, which can initiate transcription. Mg(2+) is required as a cofactor. Zn(2+) serves as cofactor.

It catalyses the reaction RNA(n) + a ribonucleoside 5'-triphosphate = RNA(n+1) + diphosphate. DNA-dependent RNA polymerase catalyzes the transcription of DNA into RNA using the four ribonucleoside triphosphates as substrates. The polypeptide is DNA-directed RNA polymerase subunit beta' (Methylorubrum extorquens (strain CM4 / NCIMB 13688) (Methylobacterium extorquens)).